We begin with the raw amino-acid sequence, 388 residues long: Glucose-6-phosphate/phosphate translocator 2, chloroplastic (388 aa).

A chloroplast-targeting transit peptide spans 1 to 68 (MLSSIKPSSS…SASNFKREVK (68 aa)). Helical transmembrane passes span 95 to 115 (LKIG…NIYN), 122 to 142 (FPYP…MMLV), 158 to 178 (FWKT…AATV), 211 to 231 (FPLP…LAAI), 233 to 253 (ELNF…AFVF), 281 to 301 (LVIL…AAGW), 305 to 325 (VSQV…FYHL), and 358 to 378 (IIIF…IAIF). An EamA domain is found at 113–231 (IYNKKVLNAF…IIGGCALAAI (119 aa)).

It belongs to the TPT transporter family. GPT (TC 2.A.7.9) subfamily. As to expression, expressed in seeds, flowers, stamens, and rosette leaves, with highest levels found in sepals and senescing leaves.

Its subcellular location is the plastid. The protein localises to the chloroplast membrane. Its function is as follows. Glucose 6-phosphate (Glc6P) transporter. Also transports inorganic phosphate, 3-phosphoglycerate, triose phosphates and, to a leser extent, phosphoenolpyruvate. Responsible for the transport of Glc6P into plastids of heterotrophic tissues where it can be used as a carbon source for starch biosynthesis, as substrate for fatty acid biosynthesis or as substrate for NADPH generation via the oxidative pentose phosphate pathway (OPPP). Required for dynamic acclimation of photosynthesis and partitioning of Glc6P between the chloroplast and the cytosol. May modulate the sensing of sugar status during early seedling development. The polypeptide is Glucose-6-phosphate/phosphate translocator 2, chloroplastic (Arabidopsis thaliana (Mouse-ear cress)).